An 861-amino-acid chain; its full sequence is Leucine--tRNA ligase (861 aa).

Residues 42–52 (PYPSGRIHMGH) carry the 'HIGH' region motif. A 'KMSKS' region motif is present at residues 623–627 (KMSKS). Lys-626 lines the ATP pocket.

It belongs to the class-I aminoacyl-tRNA synthetase family.

The protein localises to the cytoplasm. The enzyme catalyses tRNA(Leu) + L-leucine + ATP = L-leucyl-tRNA(Leu) + AMP + diphosphate. In Caulobacter sp. (strain K31), this protein is Leucine--tRNA ligase.